A 634-amino-acid chain; its full sequence is Nitrous-oxide reductase (634 aa).

Residues 1–49 (MSDKQTDKDEKTGLSRRGFLGASALTRSAVAASGLVGGVMTRDSWAAAA) constitute a signal peptide (tat-type signal). Cu cation-binding residues include histidine 125, histidine 126, and histidine 174. The Ca(2+) site is built by tyrosine 252, glutamate 255, methionine 263, aspartate 269, and asparagine 320. Cu cation-binding residues include histidine 322, histidine 378, and histidine 429. The Ca(2+) site is built by lysine 450 and glutamate 465. Residues histidine 490, histidine 579, cysteine 614, tryptophan 616, cysteine 618, histidine 622, and methionine 625 each coordinate Cu cation. The COX2-like stretch occupies residues 538 to 634 (NKVRVYMTSM…MVGRMMVEPA (97 aa)).

This sequence belongs to the NosZ family. It in the C-terminal section; belongs to the cytochrome c oxidase subunit 2 family. As to quaternary structure, homodimer. It depends on Ca(2+) as a cofactor. The cofactor is Cu cation. Post-translationally, predicted to be exported by the Tat system. The position of the signal peptide cleavage has not been experimentally proven.

The protein localises to the periplasm. The enzyme catalyses N2 + 2 Fe(III)-[cytochrome c] + H2O = nitrous oxide + 2 Fe(II)-[cytochrome c] + 2 H(+). Its pathway is nitrogen metabolism; nitrate reduction (denitrification); dinitrogen from nitrate: step 4/4. Functionally, nitrous-oxide reductase is part of a bacterial respiratory system which is activated under anaerobic conditions in the presence of nitrate or nitrous oxide. The polypeptide is Nitrous-oxide reductase (nosZ) (Pseudomonas aeruginosa).